The primary structure comprises 453 residues: Ribosomal protein uS12 methylthiotransferase RimO (453 aa).

Positions 4–120 (TSVHIVSLGC…IADHLRVLME (117 aa)) constitute an MTTase N-terminal domain. C13, C49, C83, C161, C165, and C168 together coordinate [4Fe-4S] cluster. A Radical SAM core domain is found at 147–377 (STPPYSAYLK…MEEQAVISHE (231 aa)). Residues 380 to 450 (QTLVGSLQEV…DYDLFAEVIS (71 aa)) form the TRAM domain.

Belongs to the methylthiotransferase family. RimO subfamily. Requires [4Fe-4S] cluster as cofactor.

It localises to the cytoplasm. It catalyses the reaction L-aspartate(89)-[ribosomal protein uS12]-hydrogen + (sulfur carrier)-SH + AH2 + 2 S-adenosyl-L-methionine = 3-methylsulfanyl-L-aspartate(89)-[ribosomal protein uS12]-hydrogen + (sulfur carrier)-H + 5'-deoxyadenosine + L-methionine + A + S-adenosyl-L-homocysteine + 2 H(+). Functionally, catalyzes the methylthiolation of an aspartic acid residue of ribosomal protein uS12. This is Ribosomal protein uS12 methylthiotransferase RimO from Syntrophus aciditrophicus (strain SB).